A 316-amino-acid polypeptide reads, in one-letter code: Aspartate carbamoyltransferase catalytic subunit (316 aa).

Positions 66 and 67 each coordinate carbamoyl phosphate. Lys94 is a binding site for L-aspartate. 3 residues coordinate carbamoyl phosphate: Arg116, His146, and Gln149. Positions 180 and 235 each coordinate L-aspartate. Carbamoyl phosphate-binding residues include Gly276 and Pro277.

The protein belongs to the aspartate/ornithine carbamoyltransferase superfamily. ATCase family. In terms of assembly, heterododecamer (2C3:3R2) of six catalytic PyrB chains organized as two trimers (C3), and six regulatory PyrI chains organized as three dimers (R2).

The enzyme catalyses carbamoyl phosphate + L-aspartate = N-carbamoyl-L-aspartate + phosphate + H(+). The protein operates within pyrimidine metabolism; UMP biosynthesis via de novo pathway; (S)-dihydroorotate from bicarbonate: step 2/3. Its function is as follows. Catalyzes the condensation of carbamoyl phosphate and aspartate to form carbamoyl aspartate and inorganic phosphate, the committed step in the de novo pyrimidine nucleotide biosynthesis pathway. The sequence is that of Aspartate carbamoyltransferase catalytic subunit from Stenotrophomonas maltophilia (strain R551-3).